The primary structure comprises 312 residues: Methionyl-tRNA formyltransferase (312 aa).

112–115 (SLLP) serves as a coordination point for (6S)-5,6,7,8-tetrahydrofolate.

This sequence belongs to the Fmt family.

The catalysed reaction is L-methionyl-tRNA(fMet) + (6R)-10-formyltetrahydrofolate = N-formyl-L-methionyl-tRNA(fMet) + (6S)-5,6,7,8-tetrahydrofolate + H(+). Functionally, attaches a formyl group to the free amino group of methionyl-tRNA(fMet). The formyl group appears to play a dual role in the initiator identity of N-formylmethionyl-tRNA by promoting its recognition by IF2 and preventing the misappropriation of this tRNA by the elongation apparatus. This Dehalococcoides mccartyi (strain ATCC BAA-2266 / KCTC 15142 / 195) (Dehalococcoides ethenogenes (strain 195)) protein is Methionyl-tRNA formyltransferase.